A 526-amino-acid chain; its full sequence is Glucose-6-phosphate isomerase (526 aa).

E323 (proton donor) is an active-site residue. Residues H352 and K454 contribute to the active site.

The protein belongs to the GPI family.

It localises to the cytoplasm. The enzyme catalyses alpha-D-glucose 6-phosphate = beta-D-fructose 6-phosphate. Its pathway is carbohydrate biosynthesis; gluconeogenesis. It participates in carbohydrate degradation; glycolysis; D-glyceraldehyde 3-phosphate and glycerone phosphate from D-glucose: step 2/4. Catalyzes the reversible isomerization of glucose-6-phosphate to fructose-6-phosphate. This Prochlorococcus marinus subsp. pastoris (strain CCMP1986 / NIES-2087 / MED4) protein is Glucose-6-phosphate isomerase.